A 162-amino-acid polypeptide reads, in one-letter code: NADH-quinone oxidoreductase subunit I (162 aa).

4Fe-4S ferredoxin-type domains lie at arginine 54–glutamate 83 and threonine 93–isoleucine 122. [4Fe-4S] cluster contacts are provided by cysteine 63, cysteine 66, cysteine 69, cysteine 73, cysteine 102, cysteine 105, cysteine 108, and cysteine 112.

The protein belongs to the complex I 23 kDa subunit family. In terms of assembly, NDH-1 is composed of 14 different subunits. Subunits NuoA, H, J, K, L, M, N constitute the membrane sector of the complex. It depends on [4Fe-4S] cluster as a cofactor.

The protein localises to the cell inner membrane. It carries out the reaction a quinone + NADH + 5 H(+)(in) = a quinol + NAD(+) + 4 H(+)(out). NDH-1 shuttles electrons from NADH, via FMN and iron-sulfur (Fe-S) centers, to quinones in the respiratory chain. The immediate electron acceptor for the enzyme in this species is believed to be ubiquinone. Couples the redox reaction to proton translocation (for every two electrons transferred, four hydrogen ions are translocated across the cytoplasmic membrane), and thus conserves the redox energy in a proton gradient. This is NADH-quinone oxidoreductase subunit I from Burkholderia ambifaria (strain MC40-6).